We begin with the raw amino-acid sequence, 860 residues long: Eukaryotic translation initiation factor 3 subunit C (860 aa).

Residues 1 to 76 (MSRFFYGNDS…SEESEEEDVV (76 aa)) form a disordered region. Residues 10–51 (SDSDSSGSDEEELYSDEEVEQSEEESSEEDASSEEESSEDED) show a composition bias toward acidic residues. The 175-residue stretch at 599 to 773 (FHMHINLELL…DAIVFRKGVE (175 aa)) folds into the PCI domain. A disordered region spans residues 812–860 (RDQGAGARGGRGPRGGGQARGGPRLPGGQQRRPGGQQFGGGALGGAIKA). The span at 817–831 (GARGGRGPRGGGQAR) shows a compositional bias: gly residues. The span at 832–846 (GGPRLPGGQQRRPGG) shows a compositional bias: low complexity. The segment covering 847 to 860 (QQFGGGALGGAIKA) has biased composition (gly residues).

The protein belongs to the eIF-3 subunit C family. Component of the eukaryotic translation initiation factor 3 (eIF-3) complex.

The protein localises to the cytoplasm. In terms of biological role, component of the eukaryotic translation initiation factor 3 (eIF-3) complex, which is involved in protein synthesis of a specialized repertoire of mRNAs and, together with other initiation factors, stimulates binding of mRNA and methionyl-tRNAi to the 40S ribosome. The eIF-3 complex specifically targets and initiates translation of a subset of mRNAs involved in cell proliferation. The chain is Eukaryotic translation initiation factor 3 subunit C (nip1) from Emericella nidulans (strain FGSC A4 / ATCC 38163 / CBS 112.46 / NRRL 194 / M139) (Aspergillus nidulans).